Reading from the N-terminus, the 300-residue chain is Ribosome-inactivating protein 3 (300 aa).

Glu-207 is a catalytic residue.

The protein belongs to the ribosome-inactivating protein family. Type 1 RIP subfamily. In terms of assembly, monomer. In terms of tissue distribution, accumulates to high levels in seeds.

The protein localises to the cytoplasm. It carries out the reaction Endohydrolysis of the N-glycosidic bond at one specific adenosine on the 28S rRNA.. Possesses features of some constitutive defense agent. The coordinate Opaque-2-controlled synthesis of this protein and the major seed storage proteins (zeins) may provide the germinating seedling with both nutritional benefits and protection against pathogen invasion of the surrounding endosperm. This chain is Ribosome-inactivating protein 3 (CRIP3), found in Zea mays (Maize).